The following is a 406-amino-acid chain: MSTLKNTFFITPPDTPTQAGPENIFYDFNDGARVLLPEGKWHVRLLDADSENILFCCDVDKGWVTSSKKYFVRFRIQVFRQGEETPLLDETLKLKDRPVLISFPTGTLGDLLGWFPYAERFQSLHKCRLECTMSQDIIDLLAPQYPQIQFSTPDKPRTVAPYATYRVGLYFGGDTNNQPVDFRKVGFHRSAGYILGVDPREAPVRLDLSAPRVIQEPYVCIATQSTCQAKYWNNGTGWSEVIAHLKSLGYRVMCIDRDAHYGQGFVWNHIPWGAEDFTGKLPLQERVNLLRHASFFIGLPSGLSWLAWATRIPVVLISGFSLPNSEFYTPWRVFNSHGCYGCWDDTSLNFDHHDFLWCPRHKNTDRQFECTRLITGAQVNGVINKLHRSLTEQGVEATLKKGVSNE.

Thr107, Leu108, and Gly109 together coordinate ADP-D-glycero-beta-D-manno-heptose. The Proton acceptor role is filled by Asp110. Positions 224, 226, 230, 257, 281, 302, and 326 each coordinate ADP-D-glycero-beta-D-manno-heptose. Residues Cys339, Cys342, Cys358, and Cys370 each contribute to the Fe(3+) site.

It belongs to the glycosyltransferase 9 family. As to quaternary structure, homododecamer composed of 6 homodimers forming a ring. The cofactor is Fe(3+).

The enzyme catalyses ADP-D-glycero-beta-D-manno-heptose + L-seryl-[protein] = O-(D-glycero-alpha-D-manno-heptosyl)-L-seryl-[protein] + ADP + H(+). Functionally, glycosylates adhesin TibA. Specifically adds anomer D-glycero-beta-D-manno-heptose. Cannot use ADP-L-glycero-beta-D-manno-heptose as a sugar donor. The sequence is that of Autotransporter heptosyltransferase TibC from Escherichia coli O78:H11 (strain H10407 / ETEC).